The sequence spans 592 residues: Thiol:disulfide interchange protein DsbD (592 aa).

A signal peptide spans 1–19; it reads MKLIASFSIFMLMSIWSFA. Cystine bridges form between C130/C136 and C204/C326. 8 consecutive transmembrane segments (helical) span residues 186–206, 229–249, 265–285, 318–338, 345–365, 379–399, 406–426, and 440–460; these read IWVLLIFLALGVGLAFTPCVF, FVLSFVYVQGMALTYSLLGLV, IILGALIVVFALLALVMFGAW, ISGLVASPCTTAPLTGILLYI, LLGFSALYALSLGMGIPLILF, WMNIIKVTFGFMMLAVALMFV, MATDILWSLLGLVTFSYFYVM, and ALVIFIGLFASAMYGYQTIFG. One can recognise a Thioredoxin domain in the interval 443-592; that stretch reads IFIGLFASAM…AFAAHAKNIL (150 aa). Cysteines 508 and 511 form a disulfide.

Belongs to the thioredoxin family. DsbD subfamily.

It is found in the cell inner membrane. It carries out the reaction [protein]-dithiol + NAD(+) = [protein]-disulfide + NADH + H(+). It catalyses the reaction [protein]-dithiol + NADP(+) = [protein]-disulfide + NADPH + H(+). In terms of biological role, required to facilitate the formation of correct disulfide bonds in some periplasmic proteins and for the assembly of the periplasmic c-type cytochromes. Acts by transferring electrons from cytoplasmic thioredoxin to the periplasm. This transfer involves a cascade of disulfide bond formation and reduction steps. This is Thiol:disulfide interchange protein DsbD from Pseudoalteromonas atlantica (strain T6c / ATCC BAA-1087).